A 777-amino-acid polypeptide reads, in one-letter code: Elongation factor G, mitochondrial (777 aa).

The tr-type G domain occupies 34 to 338 (LRQRNVGISA…GMCAYLPNPM (305 aa)). Residues 43-50 (AHIDSGKT), 136-140 (DTPGH), and 190-193 (NKMD) contribute to the GTP site.

This sequence belongs to the TRAFAC class translation factor GTPase superfamily. Classic translation factor GTPase family. EF-G/EF-2 subfamily.

The protein resides in the mitochondrion. It participates in protein biosynthesis; polypeptide chain elongation. Mitochondrial GTPase that catalyzes the GTP-dependent ribosomal translocation step during translation elongation. During this step, the ribosome changes from the pre-translocational (PRE) to the post-translocational (POST) state as the newly formed A-site-bound peptidyl-tRNA and P-site-bound deacylated tRNA move to the P and E sites, respectively. Catalyzes the coordinated movement of the two tRNA molecules, the mRNA and conformational changes in the ribosome. This is Elongation factor G, mitochondrial from Malassezia globosa (strain ATCC MYA-4612 / CBS 7966) (Dandruff-associated fungus).